Here is a 277-residue protein sequence, read N- to C-terminus: MDNVVDRHVFYISDGTAITAEVLGHAVMSQFPVTISSITLPFVENESRARAVKDQIDAIYQQTGVRPLVFYSIVLPEIRAIILQSEGFCQDIVQALVAPLQQEMKLDPTPIAHRTHGLNPGNLNKYDARIAAIDYTLAHDDGISLRNLDQAQVILLGVSRCGKTPTSLYLAMQFGIRAANYPFIADDMDNLTLPTSLKPLQHKLFGLTIDPERLAAIREERRENSRYASLRQCRMEVAEVEALYRKNQIPCLNSTNYSVEEIATKILDIMGLNRRMY.

ADP is bound at residue 157–164; it reads GVSRCGKT.

The protein belongs to the pyruvate, phosphate/water dikinase regulatory protein family. PSRP subfamily.

It catalyses the reaction [pyruvate, water dikinase] + ADP = [pyruvate, water dikinase]-phosphate + AMP + H(+). It carries out the reaction [pyruvate, water dikinase]-phosphate + phosphate + H(+) = [pyruvate, water dikinase] + diphosphate. Functionally, bifunctional serine/threonine kinase and phosphorylase involved in the regulation of the phosphoenolpyruvate synthase (PEPS) by catalyzing its phosphorylation/dephosphorylation. The polypeptide is Phosphoenolpyruvate synthase regulatory protein (Salmonella agona (strain SL483)).